The chain runs to 530 residues: GH3 domain-containing protein (530 aa).

The signal sequence occupies residues 1–17 (MLLWPLLLLLLLLPTLA). A disordered region spans residues 99 to 122 (LTKASQTQQEDSGEQPLPPTSNQD). N-linked (GlcNAc...) asparagine glycosylation occurs at Asn450. An N5-methylglutamine modification is found at Gln489.

It belongs to the GH3 family. Methylated at Gln-489 by N6AMT1.

The protein localises to the endoplasmic reticulum. It localises to the nucleus envelope. The chain is GH3 domain-containing protein (GHDC) from Homo sapiens (Human).